The following is a 598-amino-acid chain: Arginine--tRNA ligase (598 aa).

The short motif at 135–145 (ANPTGPIHIGG) is the 'HIGH' region element. Residues 229–248 (VDGGTDEKGEPLGEGDSEQR) are disordered. Positions 231–248 (GGTDEKGEPLGEGDSEQR) are enriched in basic and acidic residues.

The protein belongs to the class-I aminoacyl-tRNA synthetase family. As to quaternary structure, monomer.

It is found in the cytoplasm. It catalyses the reaction tRNA(Arg) + L-arginine + ATP = L-arginyl-tRNA(Arg) + AMP + diphosphate. This Bifidobacterium animalis subsp. lactis (strain AD011) protein is Arginine--tRNA ligase.